Consider the following 592-residue polypeptide: Solute carrier family 13 member 2 (592 aa).

4 helical membrane passes run 13–33 (SYLIVFFVPILLLPLPILVPS), 53–73 (ALPLAVTALFPLILFPMMGIV), 86–106 (SNLLFFGGLLVAIAVEHWNLH), and 114–134 (LLIVGVRPAPLILGFMLVTAF). Positions 165–177 (SSNVEEGSNNPTF) are enriched in polar residues. Residues 165 to 185 (SSNVEEGSNNPTFELQEPSPQ) are disordered. 8 helical membrane passes run 221–241 (MSLCVCYSASIGGIATLTGTA), 274–294 (MVILLLLAWLWLQILFLGFNF), 324–344 (PMTFAEKAISILFVILVLLWF), 371–391 (GTVAIFIGIIMFIIPSKFPGL), 450–470 (PLQSVPAPAIAIILSLLVATF), 482–502 (IFLPILASMAQAICLHPLYVM), 511–531 (LAFMLPVATPPNAIVFSFGDL), and 545–565 (IIGVLIIALAINSWGIPLFSL).

It belongs to the SLC13A/DASS transporter (TC 2.A.47) family. NADC subfamily. In terms of tissue distribution, expressed in kidney and intestine. In kidney expressed in the proximal tubule (at protein level).

The protein resides in the apical cell membrane. The enzyme catalyses succinate(out) + 3 Na(+)(out) = succinate(in) + 3 Na(+)(in). It carries out the reaction fumarate(out) + 3 Na(+)(out) = fumarate(in) + 3 Na(+)(in). The catalysed reaction is 2-oxoglutarate(out) + 3 Na(+)(out) = 2-oxoglutarate(in) + 3 Na(+)(in). With respect to regulation, li(+) decreases succinate transport in the presence of Na(+), by competing at one of the three cation binding sites. Its function is as follows. Low-affinity sodium-dicarboxylate cotransporter, that mediates the entry of citric acid cycle intermediates, such as succinate, citrate, fumarate and alpha-ketoglutarate (2-oxoglutarate) into the small intestine and renal proximal tubule. Transports the dicarboxylate into the cell with a probable stoichiometry of 3 Na(+) for 1 divalent dicarboxylate, rendering the process electrogenic. Citrate is transported in protonated form as a divalent anion, rather than the trivalent form which is normally found in blood. Has a critical role in renal dicarboxylate transport. The chain is Solute carrier family 13 member 2 (SLC13A2) from Homo sapiens (Human).